We begin with the raw amino-acid sequence, 269 residues long: Embryonic polyadenylate-binding protein 2 (269 aa).

The segment at 26 to 54 is disordered; sequence EAQGWGAWGRTEKTSLVPSAGSDKEAEEN. The region spanning 139-216 is the RRM domain; it reads RSVYVGNVDY…RVIKVLPKRT (78 aa). Residues 240 to 269 are disordered; sequence LQGSLQRKPRLRPHGQSRGRGRASPWFSPY. Residues 246 to 260 are compositionally biased toward basic residues; it reads RKPRLRPHGQSRGRG.

It localises to the cytoplasm. In terms of biological role, binds the poly(A) tail of mRNA. The protein is Embryonic polyadenylate-binding protein 2 (Pabpn1l) of Rattus norvegicus (Rat).